We begin with the raw amino-acid sequence, 119 residues long: Immunoglobulin heavy variable 3-72 (119 aa).

An N-terminal signal peptide occupies residues 1–19 (MEFGLSWVFLVVILQGVQC). Residues 20-44 (EVQLVESGGGLVQPGGSLRLSCAAS) form a framework-1 region. Residues 20–119 (EVQLVESGGG…EDTAVYYCAR (100 aa)) enclose the Ig-like domain. Cys41 and Cys117 form a disulfide bridge. The interval 45 to 52 (GFTFSDHY) is complementarity-determining-1. A framework-2 region spans residues 53–69 (MDWVRQAPGKGLEWVGR). The segment at 70 to 79 (TRNKANSYTT) is complementarity-determining-2. Residues 80-117 (EYAASVKGRFTISRDDSKNSLYLQMNSLKTEDTAVYYC) are framework-3. Residues 118–119 (AR) are complementarity-determining-3.

As to quaternary structure, immunoglobulins are composed of two identical heavy chains and two identical light chains; disulfide-linked.

The protein resides in the secreted. It localises to the cell membrane. Its function is as follows. V region of the variable domain of immunoglobulin heavy chains that participates in the antigen recognition. Immunoglobulins, also known as antibodies, are membrane-bound or secreted glycoproteins produced by B lymphocytes. In the recognition phase of humoral immunity, the membrane-bound immunoglobulins serve as receptors which, upon binding of a specific antigen, trigger the clonal expansion and differentiation of B lymphocytes into immunoglobulins-secreting plasma cells. Secreted immunoglobulins mediate the effector phase of humoral immunity, which results in the elimination of bound antigens. The antigen binding site is formed by the variable domain of one heavy chain, together with that of its associated light chain. Thus, each immunoglobulin has two antigen binding sites with remarkable affinity for a particular antigen. The variable domains are assembled by a process called V-(D)-J rearrangement and can then be subjected to somatic hypermutations which, after exposure to antigen and selection, allow affinity maturation for a particular antigen. This chain is Immunoglobulin heavy variable 3-72, found in Homo sapiens (Human).